Here is a 161-residue protein sequence, read N- to C-terminus: Transcriptional repressor NrdR (161 aa).

Positions 1–11 are enriched in polar residues; that stretch reads MRCPSCNSLDT. The disordered stretch occupies residues 1-20; that stretch reads MRCPSCNSLDTQVKDSRPTE. A zinc finger spans residues 3-34; the sequence is CPSCNSLDTQVKDSRPTEDSSVIRRRRVCVTC. In terms of domain architecture, ATP-cone spans 49–139; it reads LTVIKRNGRR…VYRNFREAKD (91 aa).

Belongs to the NrdR family. Zn(2+) serves as cofactor.

In terms of biological role, negatively regulates transcription of bacterial ribonucleotide reductase nrd genes and operons by binding to NrdR-boxes. In Bradyrhizobium sp. (strain ORS 278), this protein is Transcriptional repressor NrdR.